The sequence spans 689 residues: Putative ATP-dependent helicase IRC3 (689 aa).

The region spanning 46 to 211 (NSIRQGTKRI…SMVMDKIVYH (166 aa)) is the Helicase ATP-binding domain. Residue 59–66 (LATGGGKT) coordinates ATP. The short motif at 158–161 (DEAH) is the DEAH box element. Residues 265–438 (ILKTYLHKKQ…KIDERLRALF (174 aa)) form the Helicase C-terminal domain.

The protein belongs to the helicase family. IRC3 subfamily.

The protein localises to the mitochondrion. This Saccharomyces cerevisiae (strain ATCC 204508 / S288c) (Baker's yeast) protein is Putative ATP-dependent helicase IRC3 (IRC3).